Here is a 137-residue protein sequence, read N- to C-terminus: Large ribosomal subunit protein uL16 (137 aa).

It belongs to the universal ribosomal protein uL16 family. As to quaternary structure, part of the 50S ribosomal subunit.

In terms of biological role, binds 23S rRNA and is also seen to make contacts with the A and possibly P site tRNAs. This Spiroplasma citri protein is Large ribosomal subunit protein uL16.